Reading from the N-terminus, the 202-residue chain is Peptidyl-tRNA hydrolase (202 aa).

TRNA is bound at residue Tyr-17. His-22 serves as the catalytic Proton acceptor. TRNA contacts are provided by Phe-76, Asn-78, and Asn-124.

It belongs to the PTH family. Monomer.

The protein localises to the cytoplasm. The enzyme catalyses an N-acyl-L-alpha-aminoacyl-tRNA + H2O = an N-acyl-L-amino acid + a tRNA + H(+). In terms of biological role, hydrolyzes ribosome-free peptidyl-tRNAs (with 1 or more amino acids incorporated), which drop off the ribosome during protein synthesis, or as a result of ribosome stalling. Its function is as follows. Catalyzes the release of premature peptidyl moieties from peptidyl-tRNA molecules trapped in stalled 50S ribosomal subunits, and thus maintains levels of free tRNAs and 50S ribosomes. This chain is Peptidyl-tRNA hydrolase, found in Nitratidesulfovibrio vulgaris (strain DSM 19637 / Miyazaki F) (Desulfovibrio vulgaris).